Here is a 333-residue protein sequence, read N- to C-terminus: Glycerol-3-phosphate dehydrogenase [NAD(P)+] (333 aa).

NADPH contacts are provided by tryptophan 12, lysine 33, and lysine 105. Residues lysine 105, glycine 136, and serine 138 each contribute to the sn-glycerol 3-phosphate site. Alanine 140 serves as a coordination point for NADPH. Sn-glycerol 3-phosphate-binding residues include lysine 191, aspartate 244, serine 254, arginine 255, and asparagine 256. The active-site Proton acceptor is the lysine 191. NADPH is bound at residue arginine 255. Positions 279 and 281 each coordinate NADPH.

Belongs to the NAD-dependent glycerol-3-phosphate dehydrogenase family.

The protein localises to the cytoplasm. The enzyme catalyses sn-glycerol 3-phosphate + NAD(+) = dihydroxyacetone phosphate + NADH + H(+). The catalysed reaction is sn-glycerol 3-phosphate + NADP(+) = dihydroxyacetone phosphate + NADPH + H(+). The protein operates within membrane lipid metabolism; glycerophospholipid metabolism. Its function is as follows. Catalyzes the reduction of the glycolytic intermediate dihydroxyacetone phosphate (DHAP) to sn-glycerol 3-phosphate (G3P), the key precursor for phospholipid synthesis. The protein is Glycerol-3-phosphate dehydrogenase [NAD(P)+] of Protochlamydia amoebophila (strain UWE25).